Reading from the N-terminus, the 296-residue chain is Ribosomal RNA small subunit methyltransferase A (296 aa).

Positions 28, 30, 55, 77, 103, and 122 each coordinate S-adenosyl-L-methionine.

Belongs to the class I-like SAM-binding methyltransferase superfamily. rRNA adenine N(6)-methyltransferase family. RsmA subfamily.

Its subcellular location is the cytoplasm. It carries out the reaction adenosine(1518)/adenosine(1519) in 16S rRNA + 4 S-adenosyl-L-methionine = N(6)-dimethyladenosine(1518)/N(6)-dimethyladenosine(1519) in 16S rRNA + 4 S-adenosyl-L-homocysteine + 4 H(+). Specifically dimethylates two adjacent adenosines (A1518 and A1519) in the loop of a conserved hairpin near the 3'-end of 16S rRNA in the 30S particle. May play a critical role in biogenesis of 30S subunits. The sequence is that of Ribosomal RNA small subunit methyltransferase A from Sinorhizobium fredii (strain NBRC 101917 / NGR234).